The primary structure comprises 343 residues: Flavone 3'-O-methyltransferase OMT2 (343 aa).

Asn107 is a (E)-ferulate binding site. Positions 184, 207, 227, 228, 240, and 241 each coordinate S-adenosyl-L-homocysteine. The active-site Proton acceptor is the His245. Position 246 (Asp246) interacts with (E)-5-hydroxyferulate. Residues Glu273 and Glu305 contribute to the active site.

Belongs to the class I-like SAM-binding methyltransferase superfamily. Cation-independent O-methyltransferase family. COMT subfamily. Homodimer.

The enzyme catalyses (E)-5-hydroxyferulate + S-adenosyl-L-methionine = (E)-sinapate + S-adenosyl-L-homocysteine + H(+). It carries out the reaction luteolin + S-adenosyl-L-methionine = chrysoeriol + S-adenosyl-L-homocysteine + H(+). The catalysed reaction is quercetin + S-adenosyl-L-methionine = isorhamnetin + S-adenosyl-L-homocysteine + H(+). It catalyses the reaction (E)-caffeate + S-adenosyl-L-methionine = (E)-ferulate + S-adenosyl-L-homocysteine + H(+). The enzyme catalyses a 3'-hydroxyflavone + S-adenosyl-L-methionine = a 3'-methoxyflavone + S-adenosyl-L-homocysteine + H(+). It participates in flavonoid metabolism. In terms of biological role, catalyzes the 3'-O-methylation of the flavonoids luteolin and quercetin. Catalyzes the 3- of 5-O-methylation of the phenylpropanoids caffeate and 5-hydroxyferulate. Substrate preference is 5-hydroxyferulate &gt; luteolin &gt; quercetin &gt; caffeate. Apigenin, kempferol and 3,4-dimethylquercetin do not seem to be substrates for methylation. The sequence is that of Flavone 3'-O-methyltransferase OMT2 from Chrysosplenium americanum (American golden saxifrage).